The following is a 407-amino-acid chain: 4-hydroxy-3-methylbut-2-en-1-yl diphosphate synthase (ferredoxin) (407 aa).

The [4Fe-4S] cluster site is built by Cys316, Cys319, Cys350, and Glu357.

Belongs to the IspG family. Requires [4Fe-4S] cluster as cofactor.

The catalysed reaction is (2E)-4-hydroxy-3-methylbut-2-enyl diphosphate + 2 oxidized [2Fe-2S]-[ferredoxin] + H2O = 2-C-methyl-D-erythritol 2,4-cyclic diphosphate + 2 reduced [2Fe-2S]-[ferredoxin] + H(+). It participates in isoprenoid biosynthesis; isopentenyl diphosphate biosynthesis via DXP pathway; isopentenyl diphosphate from 1-deoxy-D-xylulose 5-phosphate: step 5/6. In terms of biological role, converts 2C-methyl-D-erythritol 2,4-cyclodiphosphate (ME-2,4cPP) into 1-hydroxy-2-methyl-2-(E)-butenyl 4-diphosphate. This is 4-hydroxy-3-methylbut-2-en-1-yl diphosphate synthase (ferredoxin) from Cyanothece sp. (strain PCC 7425 / ATCC 29141).